A 420-amino-acid polypeptide reads, in one-letter code: Acetyl-CoA acetyltransferase A, mitochondrial (420 aa).

The transit peptide at 1–33 (MAFCGTRTAARLSHSTRALHNTHRNFASQRTLN) directs the protein to the mitochondrion. Cysteine 119 acts as the Acyl-thioester intermediate in catalysis. CoA is bound by residues tyrosine 212, 251–253 (RVD), and lysine 256. Residue tyrosine 212 coordinates K(+). K(+) is bound by residues alanine 273 and alanine 274. Residue serine 277 coordinates CoA. Valine 374 serves as a coordination point for K(+). Cysteine 406 acts as the Proton donor/acceptor in catalysis.

The protein belongs to the thiolase-like superfamily. Thiolase family. In terms of assembly, homotetramer.

Its subcellular location is the mitochondrion. It catalyses the reaction 2 acetyl-CoA = acetoacetyl-CoA + CoA. The enzyme catalyses propanoyl-CoA + acetyl-CoA = 2-methyl-3-oxobutanoyl-CoA + CoA. It participates in lipid metabolism; fatty acid beta-oxidation. Functionally, this is one of the enzymes that catalyzes the last step of the mitochondrial beta-oxidation pathway, an aerobic process breaking down fatty acids into acetyl-CoA. Using free coenzyme A/CoA, catalyzes the thiolytic cleavage of medium- to long-chain 3-oxoacyl-CoAs into acetyl-CoA and a fatty acyl-CoA shortened by two carbon atoms. The activity of the enzyme is reversible and it can also catalyze the condensation of two acetyl-CoA molecules into acetoacetyl-CoA. Thereby, it plays a major role in ketone body metabolism. The chain is Acetyl-CoA acetyltransferase A, mitochondrial (acat1-a) from Xenopus laevis (African clawed frog).